The sequence spans 142 residues: Large ribosomal subunit protein uL13 (142 aa).

It belongs to the universal ribosomal protein uL13 family. Part of the 50S ribosomal subunit.

Functionally, this protein is one of the early assembly proteins of the 50S ribosomal subunit, although it is not seen to bind rRNA by itself. It is important during the early stages of 50S assembly. The sequence is that of Large ribosomal subunit protein uL13 from Caldicellulosiruptor saccharolyticus (strain ATCC 43494 / DSM 8903 / Tp8T 6331).